The following is a 1057-amino-acid chain: Carbamoyl phosphate synthase large chain (1057 aa).

The carboxyphosphate synthetic domain stretch occupies residues 1–401 (MPKRQDIETI…SLLKAIRSLE (401 aa)). ATP is bound by residues R129, R169, G175, G176, K208, I210, E215, G241, I242, H243, Q284, and E298. The 195-residue stretch at 133-327 (RTLMNDLGVP…IAKLAAKIAI (195 aa)) folds into the ATP-grasp 1 domain. Mg(2+)-binding residues include Q284, E298, and N300. 3 residues coordinate Mn(2+): Q284, E298, and N300. The interval 402 to 546 (YGVHHLGLPN…YGTYEYENES (145 aa)) is oligomerization domain. The segment at 547-929 (VVTEKEKILV…ALFKGLTASG (383 aa)) is carbamoyl phosphate synthetic domain. The ATP-grasp 2 domain occupies 671-861 (EALLHTIDVP…MAQLAMRAII (191 aa)). Positions 707, 746, 748, 752, 777, 778, 779, 780, 820, and 832 each coordinate ATP. Mg(2+)-binding residues include Q820, E832, and N834. Residues Q820, E832, and N834 each contribute to the Mn(2+) site. The MGS-like domain maps to 930–1057 (MEVKDHGTVL…ESMTFTMKNM (128 aa)). Positions 930–1057 (MEVKDHGTVL…ESMTFTMKNM (128 aa)) are allosteric domain.

This sequence belongs to the CarB family. Composed of two chains; the small (or glutamine) chain promotes the hydrolysis of glutamine to ammonia, which is used by the large (or ammonia) chain to synthesize carbamoyl phosphate. Tetramer of heterodimers (alpha,beta)4. Requires Mg(2+) as cofactor. Mn(2+) is required as a cofactor.

The enzyme catalyses hydrogencarbonate + L-glutamine + 2 ATP + H2O = carbamoyl phosphate + L-glutamate + 2 ADP + phosphate + 2 H(+). The catalysed reaction is hydrogencarbonate + NH4(+) + 2 ATP = carbamoyl phosphate + 2 ADP + phosphate + 2 H(+). It functions in the pathway amino-acid biosynthesis; L-arginine biosynthesis; carbamoyl phosphate from bicarbonate: step 1/1. It participates in pyrimidine metabolism; UMP biosynthesis via de novo pathway; (S)-dihydroorotate from bicarbonate: step 1/3. Functionally, large subunit of the glutamine-dependent carbamoyl phosphate synthetase (CPSase). CPSase catalyzes the formation of carbamoyl phosphate from the ammonia moiety of glutamine, carbonate, and phosphate donated by ATP, constituting the first step of 2 biosynthetic pathways, one leading to arginine and/or urea and the other to pyrimidine nucleotides. The large subunit (synthetase) binds the substrates ammonia (free or transferred from glutamine from the small subunit), hydrogencarbonate and ATP and carries out an ATP-coupled ligase reaction, activating hydrogencarbonate by forming carboxy phosphate which reacts with ammonia to form carbamoyl phosphate. This is Carbamoyl phosphate synthase large chain from Staphylococcus saprophyticus subsp. saprophyticus (strain ATCC 15305 / DSM 20229 / NCIMB 8711 / NCTC 7292 / S-41).